The primary structure comprises 791 residues: Penicillin-binding protein 1A (791 aa).

Residues 1-6 (MYKSLF) are Cytoplasmic-facing. Residues 7–27 (FCLKILALLFLIGCGIVAYII) traverse the membrane as a helical; Signal-anchor for type II membrane protein segment. Over 28 to 791 (YYYSRDLPDY…TEKDQSQEIY (764 aa)) the chain is Periplasmic. The transglycosylase stretch occupies residues 49-220 (TRIYSRDGKL…SELNPEKNYA (172 aa)). Glu-87 (proton donor; for transglycosylase activity) is an active-site residue. Residues 398 to 711 (DVIVVEPVKD…SSVVLPIFID (314 aa)) are transpeptidase. The Acyl-ester intermediate; for transpeptidase activity role is filled by Ser-457.

The protein in the N-terminal section; belongs to the glycosyltransferase 51 family. It in the C-terminal section; belongs to the transpeptidase family.

Its subcellular location is the cell inner membrane. It carries out the reaction [GlcNAc-(1-&gt;4)-Mur2Ac(oyl-L-Ala-gamma-D-Glu-L-Lys-D-Ala-D-Ala)](n)-di-trans,octa-cis-undecaprenyl diphosphate + beta-D-GlcNAc-(1-&gt;4)-Mur2Ac(oyl-L-Ala-gamma-D-Glu-L-Lys-D-Ala-D-Ala)-di-trans,octa-cis-undecaprenyl diphosphate = [GlcNAc-(1-&gt;4)-Mur2Ac(oyl-L-Ala-gamma-D-Glu-L-Lys-D-Ala-D-Ala)](n+1)-di-trans,octa-cis-undecaprenyl diphosphate + di-trans,octa-cis-undecaprenyl diphosphate + H(+). The catalysed reaction is Preferential cleavage: (Ac)2-L-Lys-D-Ala-|-D-Ala. Also transpeptidation of peptidyl-alanyl moieties that are N-acyl substituents of D-alanine.. The protein operates within cell wall biogenesis; peptidoglycan biosynthesis. In terms of biological role, cell wall formation. Synthesis of cross-linked peptidoglycan from the lipid intermediates. The enzyme has a penicillin-insensitive transglycosylase N-terminal domain (formation of linear glycan strands) and a penicillin-sensitive transpeptidase C-terminal domain (cross-linking of the peptide subunits). This is Penicillin-binding protein 1A (mrcA) from Rickettsia bellii (strain RML369-C).